The following is a 236-amino-acid chain: Urease accessory protein UreF (236 aa).

The protein belongs to the UreF family. UreD, UreF and UreG form a complex that acts as a GTP-hydrolysis-dependent molecular chaperone, activating the urease apoprotein by helping to assemble the nickel containing metallocenter of UreC. The UreE protein probably delivers the nickel.

It localises to the cytoplasm. Functionally, required for maturation of urease via the functional incorporation of the urease nickel metallocenter. In Synechocystis sp. (strain ATCC 27184 / PCC 6803 / Kazusa), this protein is Urease accessory protein UreF.